A 285-amino-acid chain; its full sequence is ATP synthase gamma chain (285 aa).

This sequence belongs to the ATPase gamma chain family. In terms of assembly, F-type ATPases have 2 components, CF(1) - the catalytic core - and CF(0) - the membrane proton channel. CF(1) has five subunits: alpha(3), beta(3), gamma(1), delta(1), epsilon(1). CF(0) has three main subunits: a, b and c.

The protein localises to the cell membrane. Functionally, produces ATP from ADP in the presence of a proton gradient across the membrane. The gamma chain is believed to be important in regulating ATPase activity and the flow of protons through the CF(0) complex. This Dehalococcoides mccartyi (strain CBDB1) protein is ATP synthase gamma chain.